The sequence spans 324 residues: Biotin synthase (324 aa).

Residues 37–264 form the Radical SAM core domain; sequence NEVQVAALMN…ASYVRLAAGR (228 aa). Cysteine 52, cysteine 56, and cysteine 59 together coordinate [4Fe-4S] cluster. [2Fe-2S] cluster is bound by residues cysteine 96, cysteine 127, cysteine 187, and arginine 259.

Belongs to the radical SAM superfamily. Biotin synthase family. As to quaternary structure, homodimer. [4Fe-4S] cluster is required as a cofactor. [2Fe-2S] cluster serves as cofactor.

The enzyme catalyses (4R,5S)-dethiobiotin + (sulfur carrier)-SH + 2 reduced [2Fe-2S]-[ferredoxin] + 2 S-adenosyl-L-methionine = (sulfur carrier)-H + biotin + 2 5'-deoxyadenosine + 2 L-methionine + 2 oxidized [2Fe-2S]-[ferredoxin]. Its pathway is cofactor biosynthesis; biotin biosynthesis; biotin from 7,8-diaminononanoate: step 2/2. Functionally, catalyzes the conversion of dethiobiotin (DTB) to biotin by the insertion of a sulfur atom into dethiobiotin via a radical-based mechanism. The protein is Biotin synthase of Anaplasma marginale (strain Florida).